Reading from the N-terminus, the 492-residue chain is Catalase (492 aa).

Residues His65 and Asn138 contribute to the active site. Tyr348 serves as a coordination point for heme.

Belongs to the catalase family. In terms of assembly, homotetramer. Heme serves as cofactor. As to expression, in stems, leaves, roots and developing fruits.

Its subcellular location is the cytoplasm. It localises to the cytosol. The protein localises to the peroxisome matrix. The catalysed reaction is 2 H2O2 = O2 + 2 H2O. Functionally, catalyzes the degradation of hydrogen peroxide (H(2)O(2)) generated by peroxisomal oxidases to water and oxygen, thereby protecting cells from the toxic effects of hydrogen peroxide. This is Catalase (CAT) from Capsicum annuum (Capsicum pepper).